The sequence spans 139 residues: MLMPKRVKYRKTQRGRMKGNAGRGTSVAFGSFGLKAIEPAWITSRQIEAARVAMNRYMKRDGKIWIRIFPDKPVSKKAAETRMGSGKGSPEFWVAVVKPGRIMFEADGVPMEVATEAFRLAAKKLPIKTRFIVRPDYEA.

The protein belongs to the universal ribosomal protein uL16 family. As to quaternary structure, part of the 50S ribosomal subunit.

Binds 23S rRNA and is also seen to make contacts with the A and possibly P site tRNAs. The protein is Large ribosomal subunit protein uL16 of Chlorobium luteolum (strain DSM 273 / BCRC 81028 / 2530) (Pelodictyon luteolum).